The primary structure comprises 279 residues: Aspartate/glutamate leucyltransferase (279 aa).

The tract at residues 245–279 (ARERGARPPRGPGALKDACDLPLSDAQPADIEDLD) is disordered.

The protein belongs to the R-transferase family. Bpt subfamily.

The protein resides in the cytoplasm. It carries out the reaction N-terminal L-glutamyl-[protein] + L-leucyl-tRNA(Leu) = N-terminal L-leucyl-L-glutamyl-[protein] + tRNA(Leu) + H(+). It catalyses the reaction N-terminal L-aspartyl-[protein] + L-leucyl-tRNA(Leu) = N-terminal L-leucyl-L-aspartyl-[protein] + tRNA(Leu) + H(+). Its function is as follows. Functions in the N-end rule pathway of protein degradation where it conjugates Leu from its aminoacyl-tRNA to the N-termini of proteins containing an N-terminal aspartate or glutamate. This chain is Aspartate/glutamate leucyltransferase, found in Caulobacter vibrioides (strain ATCC 19089 / CIP 103742 / CB 15) (Caulobacter crescentus).